A 312-amino-acid polypeptide reads, in one-letter code: UDP-N-acetylenolpyruvoylglucosamine reductase (312 aa).

The region spanning 33 to 199 (RVGGKAEWYC…TGATLQLLPG (167 aa)) is the FAD-binding PCMH-type domain. Residue R178 is part of the active site. S229 acts as the Proton donor in catalysis. Residue E299 is part of the active site.

It belongs to the MurB family. FAD serves as cofactor.

It is found in the cytoplasm. The enzyme catalyses UDP-N-acetyl-alpha-D-muramate + NADP(+) = UDP-N-acetyl-3-O-(1-carboxyvinyl)-alpha-D-glucosamine + NADPH + H(+). It participates in cell wall biogenesis; peptidoglycan biosynthesis. In terms of biological role, cell wall formation. The sequence is that of UDP-N-acetylenolpyruvoylglucosamine reductase from Synechococcus sp. (strain JA-3-3Ab) (Cyanobacteria bacterium Yellowstone A-Prime).